A 185-amino-acid chain; its full sequence is Ribosome-recycling factor (185 aa).

The protein belongs to the RRF family.

It is found in the cytoplasm. Responsible for the release of ribosomes from messenger RNA at the termination of protein biosynthesis. May increase the efficiency of translation by recycling ribosomes from one round of translation to another. This Carboxydothermus hydrogenoformans (strain ATCC BAA-161 / DSM 6008 / Z-2901) protein is Ribosome-recycling factor.